The following is a 432-amino-acid chain: uncharacterized protein (432 aa).

The residue at position 243 (Lys-243) is an N6-(pyridoxal phosphate)lysine.

Belongs to the class-II pyridoxal-phosphate-dependent aminotransferase family. Pyridoxal 5'-phosphate is required as a cofactor.

Its subcellular location is the cytoplasm. This is an uncharacterized protein from Methanocaldococcus jannaschii (strain ATCC 43067 / DSM 2661 / JAL-1 / JCM 10045 / NBRC 100440) (Methanococcus jannaschii).